Here is a 2271-residue protein sequence, read N- to C-terminus: Protein Ycf2 (2271 aa).

1628-1635 (GSIGTGRS) serves as a coordination point for ATP.

It belongs to the Ycf2 family.

It is found in the plastid. The protein localises to the chloroplast stroma. Probable ATPase of unknown function. Its presence in a non-photosynthetic plant (Epifagus virginiana) and experiments in tobacco indicate that it has an essential function which is probably not related to photosynthesis. This Illicium oligandrum (Star anise) protein is Protein Ycf2.